The chain runs to 305 residues: Putative F-box protein PP2-B8 (305 aa).

The 47-residue stretch at 33-79 (VAELDDLPEECVSIIVSFTSPQDACVLASVSKTFASAVKSDIVWEKF) folds into the F-box domain.

The chain is Putative F-box protein PP2-B8 (PP2B8) from Arabidopsis thaliana (Mouse-ear cress).